We begin with the raw amino-acid sequence, 572 residues long: Phospholipase B-like protein B (572 aa).

An N-terminal signal peptide occupies residues 1–28 (MNKLKSNFILNIVILFTILIFNINFINC). 6 N-linked (GlcNAc...) asparagine glycosylation sites follow: asparagine 73, asparagine 138, asparagine 219, asparagine 427, asparagine 544, and asparagine 564.

It belongs to the phospholipase B-like family.

It localises to the secreted. Probable phospholipase. In Dictyostelium discoideum (Social amoeba), this protein is Phospholipase B-like protein B (plbB).